Reading from the N-terminus, the 322-residue chain is Myeloid-associated differentiation marker (322 aa).

Residues 1 to 25 are disordered; the sequence is MPVTVTRTTITTTTTSSSGQGSPTI. Phosphoserine is present on serine 22. 2 consecutive MARVEL domains span residues 31–163 and 168–319; these read ALTQ…ARPG and YMAT…HLVF. 8 helical membrane passes run 41-61, 70-90, 101-121, 137-157, 171-191, 203-223, 239-259, and 294-314; these read LLQL…GAWT, FTWC…LCGL, FPIT…IIYP, AIAA…EVAW, TVPG…FAFI, LEWC…AILL, FLSG…VLWP, and LAVA…LVHS.

The protein belongs to the MAL family.

It is found in the membrane. In Pongo abelii (Sumatran orangutan), this protein is Myeloid-associated differentiation marker (MYADM).